The sequence spans 345 residues: Aspartate--ammonia ligase (345 aa).

Belongs to the class-II aminoacyl-tRNA synthetase family. AsnA subfamily.

It is found in the cytoplasm. It carries out the reaction L-aspartate + NH4(+) + ATP = L-asparagine + AMP + diphosphate + H(+). It functions in the pathway amino-acid biosynthesis; L-asparagine biosynthesis; L-asparagine from L-aspartate (ammonia route): step 1/1. The protein is Aspartate--ammonia ligase of Bacteroides fragilis (strain ATCC 25285 / DSM 2151 / CCUG 4856 / JCM 11019 / LMG 10263 / NCTC 9343 / Onslow / VPI 2553 / EN-2).